Reading from the N-terminus, the 1244-residue chain is Protein MMS22-like (1244 aa).

This sequence belongs to the MMS22 family. MMS22L subfamily. Component of the MMS22L-TONSL complex, a complex at least composed of MMS22L and TONSL/NFKBIL2. Interacts with RAD51; interaction is direct. Post-translationally, degraded by the ubiquitin-proteasome system upon replication stress.

The protein resides in the nucleus. It is found in the chromosome. In terms of biological role, component of the MMS22L-TONSL complex, a complex that promotes homologous recombination-mediated repair of double-strand breaks (DSBs) at stalled or collapsed replication forks. The MMS22L-TONSL complex is required to maintain genome integrity during DNA replication. It mediates the assembly of RAD51 filaments on single-stranded DNA (ssDNA): the MMS22L-TONSL complex is recruited to DSBs following histone replacement by histone chaperones and eviction of the replication protein A complex (RPA/RP-A) from DSBs. Following recruitment to DSBs, the TONSL-MMS22L complex promotes recruitment of RAD51 filaments and subsequent homologous recombination. Within the complex, MMS22L acts by binding ssDNA. The protein is Protein MMS22-like (MMS22L) of Bos taurus (Bovine).